We begin with the raw amino-acid sequence, 274 residues long: Halorhodopsin (274 aa).

A propeptide spanning residues 1-21 (MSITSVPGVVDAGVLGAQSAA) is cleaved from the precursor. Topologically, residues 22 to 25 (AVRE) are extracellular. Residues 26 to 51 (NALLSSSLWVNVALAGIAILVFVYMG) form a helical membrane-spanning segment. Residues 52-57 (RTIRPG) are Cytoplasmic-facing. A helical membrane pass occupies residues 58–81 (RPRLIWGATLMIPLVSISSYLGLL). At 82–105 (SGLTVGMIEMPAGHALAGEMVRSQ) the chain is on the extracellular side. Positions 105, 111, and 115 each coordinate chloride. The helical transmembrane segment at 106-127 (WGRYLTWALSTPMILLALGLLA) threads the bilayer. Over 128 to 130 (DVD) the chain is Cytoplasmic. A helical membrane pass occupies residues 131 to 154 (LGSLFTVIAADIGMCVTGLAAAMT). The Extracellular segment spans residues 155 to 157 (TSA). The chain crosses the membrane as a helical span at residues 158-180 (LLFRWAFYAISCAFFVVVLSALV). Residues 181–192 (TDWAASASSAGT) are Cytoplasmic-facing. A helical transmembrane segment spans residues 193–216 (AEIFDTLRVLTVVLWLGYPIVWAV). The Extracellular portion of the chain corresponds to 217–226 (GVEGLALVQS). A helical transmembrane segment spans residues 227–255 (VGVTSWAYSVLDVFAKYVFAFILLRWVAN). Residue Lys242 is modified to N6-(retinylidene)lysine. The Cytoplasmic portion of the chain corresponds to 256-274 (NERTVAVAGQTLGTMSSDD).

This sequence belongs to the archaeal/bacterial/fungal opsin family. In terms of assembly, homotrimer.

The protein resides in the cell membrane. Light-driven chloride pump. The polypeptide is Halorhodopsin (hop) (Halobacterium salinarum (strain ATCC 29341 / DSM 671 / R1)).